We begin with the raw amino-acid sequence, 870 residues long: Leucine--tRNA ligase (870 aa).

Positions 42–52 match the 'HIGH' region motif; the sequence is PYPSGKLHMGH. The 'KMSKS' region signature appears at 629 to 633; it reads KMSKS. An ATP-binding site is contributed by Lys-632.

The protein belongs to the class-I aminoacyl-tRNA synthetase family.

The protein resides in the cytoplasm. The catalysed reaction is tRNA(Leu) + L-leucine + ATP = L-leucyl-tRNA(Leu) + AMP + diphosphate. The polypeptide is Leucine--tRNA ligase (Azotobacter vinelandii (strain DJ / ATCC BAA-1303)).